The sequence spans 219 residues: Interleukin-6 (219 aa).

A signal peptide spans 1-20 (MNSSTRYLSLLSALVVLVKG). Cysteines 103 and 111 form a disulfide.

The protein belongs to the IL-6 superfamily. In terms of assembly, component of a hexamer of two molecules each of IL6, IL6R and IL6ST; first binds to IL6R to associate with the signaling subunit IL6ST. In terms of tissue distribution, expressed in spleen, gill and gastrointestinal tract, ovary and brain. Highest expression in ovary.

It localises to the secreted. In terms of biological role, cytokine with a wide variety of biological functions in immunity, tissue regeneration, and metabolism. Binds to IL6R, then the complex associates to the signaling subunit IL6ST/gp130 to trigger the intracellular IL6-signaling pathway. The interaction with the membrane-bound IL6R and IL6ST stimulates 'classic signaling', whereas the binding of IL6 and soluble IL6R to IL6ST stimulates 'trans-signaling'. Alternatively, 'cluster signaling' occurs when membrane-bound IL6:IL6R complexes on transmitter cells activate IL6ST receptors on neighboring receiver cells. In Oncorhynchus mykiss (Rainbow trout), this protein is Interleukin-6 (il6).